The chain runs to 242 residues: Peptidase E (242 aa).

Active-site charge relay system residues include Ser123, Asp138, and His160.

The protein belongs to the peptidase S51 family.

It localises to the cytoplasm. It carries out the reaction Dipeptidase E catalyzes the hydrolysis of dipeptides Asp-|-Xaa. It does not act on peptides with N-terminal Glu, Asn or Gln, nor does it cleave isoaspartyl peptides.. In terms of biological role, hydrolyzes dipeptides containing N-terminal aspartate residues. May play a role in allowing the cell to use peptide aspartate to spare carbon otherwise required for the synthesis of the aspartate family of amino acids. This Nostoc sp. (strain PCC 7120 / SAG 25.82 / UTEX 2576) protein is Peptidase E.